Reading from the N-terminus, the 618-residue chain is 1-deoxy-D-xylulose-5-phosphate synthase (618 aa).

Residues H76 and 117-119 contribute to the thiamine diphosphate site; that span reads GHS. A Mg(2+)-binding site is contributed by D148. Residues 149 to 150, N177, Y284, and E364 each bind thiamine diphosphate; that span reads GA. N177 contributes to the Mg(2+) binding site.

It belongs to the transketolase family. DXPS subfamily. As to quaternary structure, homodimer. Requires Mg(2+) as cofactor. Thiamine diphosphate serves as cofactor.

The enzyme catalyses D-glyceraldehyde 3-phosphate + pyruvate + H(+) = 1-deoxy-D-xylulose 5-phosphate + CO2. It participates in metabolic intermediate biosynthesis; 1-deoxy-D-xylulose 5-phosphate biosynthesis; 1-deoxy-D-xylulose 5-phosphate from D-glyceraldehyde 3-phosphate and pyruvate: step 1/1. Its function is as follows. Catalyzes the acyloin condensation reaction between C atoms 2 and 3 of pyruvate and glyceraldehyde 3-phosphate to yield 1-deoxy-D-xylulose-5-phosphate (DXP). The chain is 1-deoxy-D-xylulose-5-phosphate synthase from Francisella philomiragia subsp. philomiragia (strain ATCC 25017 / CCUG 19701 / FSC 153 / O#319-036).